We begin with the raw amino-acid sequence, 283 residues long: Large ribosomal subunit protein uL2c (283 aa).

A disordered region spans residues 229–274 (GVVMNPIDHPHGGGEGKVPIGRKKPLTPWGHPALGRKSRKRRKYSD). Over residues 262–271 (LGRKSRKRRK) the composition is skewed to basic residues.

It belongs to the universal ribosomal protein uL2 family. In terms of assembly, part of the 50S ribosomal subunit.

It localises to the plastid. This is Large ribosomal subunit protein uL2c (rpl2) from Aneura mirabilis (Parasitic liverwort).